Here is a 223-residue protein sequence, read N- to C-terminus: Endonuclease V (223 aa).

Residues D35 and D103 each contribute to the Mg(2+) site.

This sequence belongs to the endonuclease V family. Mg(2+) is required as a cofactor.

Its subcellular location is the cytoplasm. It catalyses the reaction Endonucleolytic cleavage at apurinic or apyrimidinic sites to products with a 5'-phosphate.. DNA repair enzyme involved in the repair of deaminated bases. Selectively cleaves double-stranded DNA at the second phosphodiester bond 3' to a deoxyinosine leaving behind the intact lesion on the nicked DNA. The polypeptide is Endonuclease V (Klebsiella pneumoniae subsp. pneumoniae (strain ATCC 700721 / MGH 78578)).